Here is a 106-residue protein sequence, read N- to C-terminus: UPF0145 protein VC_A0951 (106 aa).

The protein belongs to the UPF0145 family.

This Vibrio cholerae serotype O1 (strain ATCC 39315 / El Tor Inaba N16961) protein is UPF0145 protein VC_A0951.